Reading from the N-terminus, the 323-residue chain is Lipoyl synthase (323 aa).

[4Fe-4S] cluster-binding residues include Cys-61, Cys-66, Cys-72, Cys-87, Cys-91, Cys-94, and Ser-300. The region spanning 73 to 289 (WDKKHATFMI…ETVAYSKGFL (217 aa)) is the Radical SAM core domain.

It belongs to the radical SAM superfamily. Lipoyl synthase family. [4Fe-4S] cluster serves as cofactor.

The protein resides in the cytoplasm. It carries out the reaction [[Fe-S] cluster scaffold protein carrying a second [4Fe-4S](2+) cluster] + N(6)-octanoyl-L-lysyl-[protein] + 2 oxidized [2Fe-2S]-[ferredoxin] + 2 S-adenosyl-L-methionine + 4 H(+) = [[Fe-S] cluster scaffold protein] + N(6)-[(R)-dihydrolipoyl]-L-lysyl-[protein] + 4 Fe(3+) + 2 hydrogen sulfide + 2 5'-deoxyadenosine + 2 L-methionine + 2 reduced [2Fe-2S]-[ferredoxin]. It participates in protein modification; protein lipoylation via endogenous pathway; protein N(6)-(lipoyl)lysine from octanoyl-[acyl-carrier-protein]: step 2/2. In terms of biological role, catalyzes the radical-mediated insertion of two sulfur atoms into the C-6 and C-8 positions of the octanoyl moiety bound to the lipoyl domains of lipoate-dependent enzymes, thereby converting the octanoylated domains into lipoylated derivatives. The protein is Lipoyl synthase of Rhizobium leguminosarum bv. trifolii (strain WSM2304).